Consider the following 1130-residue polypeptide: MHC class II transactivator (1130 aa).

Residues 94-132 (AYANIAELDQYVFQDSQLEGLSKDIFKHIGPDEVIGESM) form a required for acetyltransferase activity region. The tract at residues 269–303 (PSGFTVHGLPTSPDRPGSTSPFAPSATDLPSMPEP) is disordered. The region spanning 414–724 (RVIAVLGKAG…CFLGALWLAL (311 aa)) is the NACHT domain. Residue 420-427 (GKAGQGKS) participates in GTP binding. LRR repeat units lie at residues 985–1008 (SLQH…SQLS), 1016–1037 (SLET…KLAE), 1045–1066 (SLLR…SLAR), and 1073–1093 (SLRV…QQLA).

As to quaternary structure, interacts with ZXDA and ZXDC. Interacts with PML (isoform PML-2). Interacts with TAF7; interaction inhibits CIITA acetyltransferase activity, thereby repressing transcription. In terms of processing, autophosphorylated, affecting interaction with TAF7.

The protein localises to the nucleus. The protein resides in the PML body. The enzyme catalyses L-seryl-[protein] + ATP = O-phospho-L-seryl-[protein] + ADP + H(+). It carries out the reaction L-threonyl-[protein] + ATP = O-phospho-L-threonyl-[protein] + ADP + H(+). Essential for transcriptional activity of the HLA class II promoter; activation is via the proximal promoter. Does not bind DNA. May act in a coactivator-like fashion through protein-protein interactions by contacting factors binding to the proximal MHC class II promoter, to elements of the transcription machinery, or both PubMed:8402893, PubMed:7749984,. Alternatively it may activate HLA class II transcription by modifying proteins that bind to the MHC class II promoter. Also mediates enhanced MHC class I transcription; the promoter element requirements for CIITA-mediated transcription are distinct from those of constitutive MHC class I transcription, and CIITA can functionally replace TAF1 at these genes. Activates CD74 transcription. Exhibits intrinsic GTP-stimulated acetyltransferase activity. Exhibits serine/threonine protein kinase activity: can phosphorylate the TFIID component TAF7, the RAP74 subunit of the general transcription factor TFIIF, histone H2B at 'Ser-37' and other histones (in vitro). Has antiviral activity against Ebola virus and coronaviruses, including SARS-CoV-2. Induces resistance by up-regulation of the p41 isoform of CD74, which blocks cathepsin-mediated cleavage of viral glycoproteins, thereby preventing viral fusion. Its function is as follows. Exhibits dominant-negative suppression of MHC class II gene expression. This is MHC class II transactivator from Homo sapiens (Human).